Here is a 708-residue protein sequence, read N- to C-terminus: Ribosomal RNA large subunit methyltransferase K/L (708 aa).

The region spanning 43-154 (QGYQITLWTR…RGKITIGINF (112 aa)) is the THUMP domain.

Belongs to the methyltransferase superfamily. RlmKL family.

It localises to the cytoplasm. The catalysed reaction is guanosine(2445) in 23S rRNA + S-adenosyl-L-methionine = N(2)-methylguanosine(2445) in 23S rRNA + S-adenosyl-L-homocysteine + H(+). It carries out the reaction guanosine(2069) in 23S rRNA + S-adenosyl-L-methionine = N(2)-methylguanosine(2069) in 23S rRNA + S-adenosyl-L-homocysteine + H(+). In terms of biological role, specifically methylates the guanine in position 2445 (m2G2445) and the guanine in position 2069 (m7G2069) of 23S rRNA. This Shewanella amazonensis (strain ATCC BAA-1098 / SB2B) protein is Ribosomal RNA large subunit methyltransferase K/L.